Consider the following 129-residue polypeptide: Small ribosomal subunit protein uS8 (129 aa).

It belongs to the universal ribosomal protein uS8 family. As to quaternary structure, part of the 30S ribosomal subunit.

Functionally, one of the primary rRNA binding proteins, it binds directly to 16S rRNA central domain where it helps coordinate assembly of the platform of the 30S subunit. The protein is Small ribosomal subunit protein uS8 of Thermoplasma volcanium (strain ATCC 51530 / DSM 4299 / JCM 9571 / NBRC 15438 / GSS1).